A 721-amino-acid chain; its full sequence is Polyribonucleotide nucleotidyltransferase (721 aa).

Mg(2+) contacts are provided by Asp-495 and Asp-501. The 60-residue stretch at 562-621 (PRLLSFRIDPELIGTVIGPGGRTIKGITERTNTKIDIEDSGIVTIASHDGAAADEAQKII) folds into the KH domain. In terms of domain architecture, S1 motif spans 631-699 (GEVFSGAITR…NRGRINLTLR (69 aa)). The segment at 700–721 (GVPQNGEEAEPAPAPTPVAPLN) is disordered. A compositionally biased stretch (pro residues) spans 711–721 (APAPTPVAPLN).

The protein belongs to the polyribonucleotide nucleotidyltransferase family. Mg(2+) is required as a cofactor.

It localises to the cytoplasm. It carries out the reaction RNA(n+1) + phosphate = RNA(n) + a ribonucleoside 5'-diphosphate. Involved in mRNA degradation. Catalyzes the phosphorolysis of single-stranded polyribonucleotides processively in the 3'- to 5'-direction. This is Polyribonucleotide nucleotidyltransferase from Synechococcus sp. (strain WH7803).